Consider the following 276-residue polypeptide: Glutamate 5-kinase (276 aa).

ATP is bound at residue lysine 14. The substrate site is built by serine 54, aspartate 141, and asparagine 157. Residues 177–178 and 219–225 each bind ATP; these read SD and TGGMLTK.

This sequence belongs to the glutamate 5-kinase family.

The protein resides in the cytoplasm. It catalyses the reaction L-glutamate + ATP = L-glutamyl 5-phosphate + ADP. It functions in the pathway amino-acid biosynthesis; L-proline biosynthesis; L-glutamate 5-semialdehyde from L-glutamate: step 1/2. Catalyzes the transfer of a phosphate group to glutamate to form L-glutamate 5-phosphate. This chain is Glutamate 5-kinase, found in Listeria monocytogenes serovar 1/2a (strain ATCC BAA-679 / EGD-e).